The following is a 638-amino-acid chain: Neuroendocrine convertase 2 (638 aa).

Positions 1–25 are cleaved as a signal peptide; the sequence is MKGGCVSQWKAAAGLLFCVTVFASA. The propeptide occupies 26–109; the sequence is ERPVFTNHFL…QQEGFDRKKR (84 aa). One can recognise a Peptidase S8 domain in the interval 129–453; the sequence is QWYLINTGQA…YGVLDAGAMV (325 aa). Active-site charge relay system residues include D167 and H208. Disulfide bonds link C225–C376 and C317–C347. N-linked (GlcNAc...) asparagine glycosylation occurs at N375. Residue S384 is the Charge relay system of the active site. Positions 461 to 597 constitute a P/Homo B domain; sequence TVPERFHCVG…TLMLHGSQSA (137 aa). The cysteines at positions 468 and 494 are disulfide-linked. 2 N-linked (GlcNAc...) asparagine glycosylation sites follow: N514 and N524.

It belongs to the peptidase S8 family. Furin subfamily.

The protein localises to the cytoplasmic vesicle. Its subcellular location is the secretory vesicle. It is found in the secreted. The enzyme catalyses Release of protein hormones and neuropeptides from their precursors, generally by hydrolysis of -Lys-Arg-|- bonds.. In terms of biological role, serine endopeptidase which is involved in the processing of hormone and other protein precursors at sites comprised of pairs of basic amino acid residues. Responsible for the release of glucagon from proglucagon in pancreatic A cells. This chain is Neuroendocrine convertase 2 (PCSK2), found in Sus scrofa (Pig).